The sequence spans 238 residues: 1-(5-phosphoribosyl)-5-[(5-phosphoribosylamino)methylideneamino] imidazole-4-carboxamide isomerase (238 aa).

Asp8 functions as the Proton acceptor in the catalytic mechanism. Residue Asp129 is the Proton donor of the active site.

The protein belongs to the HisA/HisF family.

Its subcellular location is the cytoplasm. The enzyme catalyses 1-(5-phospho-beta-D-ribosyl)-5-[(5-phospho-beta-D-ribosylamino)methylideneamino]imidazole-4-carboxamide = 5-[(5-phospho-1-deoxy-D-ribulos-1-ylimino)methylamino]-1-(5-phospho-beta-D-ribosyl)imidazole-4-carboxamide. Its pathway is amino-acid biosynthesis; L-histidine biosynthesis; L-histidine from 5-phospho-alpha-D-ribose 1-diphosphate: step 4/9. This is 1-(5-phosphoribosyl)-5-[(5-phosphoribosylamino)methylideneamino] imidazole-4-carboxamide isomerase from Brachyspira hyodysenteriae (strain ATCC 49526 / WA1).